The chain runs to 268 residues: Lectin ESA-2 (268 aa).

A run of 4 repeats spans residues 1–67, 68–135, 136–202, and 203–268. The 4 X approximate tandem repeats stretch occupies residues 1–268; it reads GRYTVQNQWG…PIGFKGVATS (268 aa).

Monomer.

In terms of biological role, lectin specific for high mannose N-glycans, recognizes the branched moiety of these glycans. Does not recognize other types of N-glycans or monosaccharides. Agglutinates trypsin-treated sheep and rabbit erythrocytes and untreated sheep erythrocytes. Has mitogenic activity on mouse lymphocytes. Does not require metal ions for activity. In Eucheuma serra (Marine red alga), this protein is Lectin ESA-2.